The following is a 449-amino-acid chain: Deoxyguanosinetriphosphate triphosphohydrolase-like protein (449 aa).

A disordered region spans residues 1–27 (MTSSVWQERRHGEDKQRRNDHRSPYQR). Basic and acidic residues predominate over residues 7 to 27 (QERRHGEDKQRRNDHRSPYQR). The 197-residue stretch at 59 to 255 (RLTHSLEVSQ…MELADDIAYA (197 aa)) folds into the HD domain.

This sequence belongs to the dGTPase family. Type 2 subfamily.

The chain is Deoxyguanosinetriphosphate triphosphohydrolase-like protein from Shewanella baltica (strain OS185).